The sequence spans 102 residues: Small ribosomal subunit protein uS10 (102 aa).

This sequence belongs to the universal ribosomal protein uS10 family. Part of the 30S ribosomal subunit.

Its function is as follows. Involved in the binding of tRNA to the ribosomes. In Moorella thermoacetica (strain ATCC 39073 / JCM 9320), this protein is Small ribosomal subunit protein uS10.